A 323-amino-acid chain; its full sequence is V-type ATP synthase subunit C (323 aa).

The protein belongs to the V-ATPase V0D/AC39 subunit family.

Its function is as follows. Produces ATP from ADP in the presence of a proton gradient across the membrane. In Thermus thermophilus (strain ATCC 27634 / DSM 579 / HB8), this protein is V-type ATP synthase subunit C (atpC).